The following is a 457-amino-acid chain: GTPase Era, mitochondrial (457 aa).

The transit peptide at 1–18 directs the protein to the mitochondrion; it reads MAFRVSISTFGKSLRVRR. The Era-type G domain maps to 107–350; the sequence is KVLRVAIIGA…RYLVVGAKPG (244 aa). Positions 115–122 are G1; it reads GAPNAGKS. 115 to 122 lines the GTP pocket; it reads GAPNAGKS. Residues 141-145 form a G2 region; that stretch reads HTTRA. The G3 stretch occupies residues 162-165; it reads DTPG. GTP-binding positions include 162-166 and 231-234; these read DTPGL and NKVD. Residues 231 to 234 form a G4 region; sequence NKVD. Positions 270-290 are enriched in basic and acidic residues; that stretch reads AERRTDREARTSGSGDEEKPG. Residues 270-300 form a disordered region; it reads AERRTDREARTSGSGDEEKPGGDVADGEGSE. Residues 328-330 are G5; that stretch reads VSA. The KH type-2 domain occupies 376–457; that stretch reads LLEYLPKEVP…KLRLSVKVKN (82 aa).

It belongs to the TRAFAC class TrmE-Era-EngA-EngB-Septin-like GTPase superfamily. Era GTPase family.

The protein resides in the mitochondrion matrix. It is found in the mitochondrion inner membrane. Its function is as follows. Probable GTPase that plays a role in the mitochondrial ribosomal small subunit assembly. Specifically binds the 12S mitochondrial rRNA (12S mt-rRNA) to a 33 nucleotide section delineating the 3' terminal stem-loop region. May act as a chaperone that protects the 12S mt-rRNA on the 28S mitoribosomal subunit during ribosomal small subunit assembly. In Salmo salar (Atlantic salmon), this protein is GTPase Era, mitochondrial (eral1).